Reading from the N-terminus, the 524-residue chain is Butyrophilin subfamily 1 member A1 (524 aa).

An N-terminal signal peptide occupies residues 1–26 (MAVPTNSCLLVCLLTLTVLQLPTLDS). Residues 27–247 (AAPFDVTAPQ…APFVPRLTPW (221 aa)) are Extracellular-facing. 2 Ig-like V-type domains span residues 29 to 141 (PFDV…VYLK) and 149 to 235 (PQIS…VEIS). Intrachain disulfides connect cysteine 51–cysteine 125 and cysteine 165–cysteine 219. Asparagine 56 and asparagine 216 each carry an N-linked (GlcNAc...) asparagine glycan. The helical transmembrane segment at 248–268 (IVAVAIILLALGFLTIGSIFF) threads the bilayer. The Cytoplasmic segment spans residues 269–524 (TWKLYKERSS…IPFSPSQAAP (256 aa)). A B30.2/SPRY domain is found at 286-480 (SKERLLEELR…LTICSTANGP (195 aa)).

This sequence belongs to the immunoglobulin superfamily. BTN/MOG family. In terms of assembly, seems to associate with xanthine dehydrogenase/oxidase. Post-translationally, N-glycosylated. Strongly expressed in lactating mammary tissue (at protein level). About 100-fold lower levels in virgin mammary tissue. Also detected in spleen and thymus at 10-20 times lower levels compared to those detected in virgin mammary gland. Very low levels in several other tissues, including brain, heart, kidney, lymph node, lung and small intestine. In the thymus, detected in the stroma, in epithelial cells (at protein level). Most prominent in medullary areas of the thymus and at the corticomedullary junction (at protein level).

The protein resides in the membrane. In terms of biological role, may function in the secretion of milk-fat droplets. May act as a specific membrane-associated receptor for the association of cytoplasmic droplets with the apical plasma membrane. Inhibits the proliferation of CD4 and CD8 T-cells activated by anti-CD3 antibodies, T-cell metabolism and IL2 and IFNG secretion. The sequence is that of Butyrophilin subfamily 1 member A1 (Btn1a1) from Mus musculus (Mouse).